The primary structure comprises 217 residues: GRB2-related adapter protein (217 aa).

Residues 1 to 58 (MESVALYSFQATESDELAFNKGDTLKILNMEDDQNWYKAELRGAEGFVPKNYIRVKPH) form the SH3 1 domain. Residues 60-152 (WYSGRISRQL…RRQIFLCDEQ (93 aa)) form the SH2 domain. In terms of domain architecture, SH3 2 spans 158-217 (SRACFAQAQFDFSAQDPSQLSLRRGDIVEVVEREDPHWWRGRAGGRLGFFPRSYVQPVHL).

Belongs to the GRB2/sem-5/DRK family. Associates through its SH2 domain with ligand-activated receptors for stem cell factor (KIT) and erythropoietin (EPOR). Also forms a stable complex with the Bcr-Abl oncoprotein. GRAP is associated with the Ras guanine nucleotide exchange factor SOS1, primarily through its N-terminal SH3 domain. Interacts with phosphorylated LAT upon TCR activation. Interacts with SHB. As to expression, expressed in inner ear, in neruonal fibers innervating cochlear and utricular auditory hair cells (at protein level).

Its subcellular location is the membrane. It localises to the synapse. In terms of biological role, couples signals from receptor and cytoplasmic tyrosine kinases to the Ras signaling pathway. Plays a role in the inner ear and in hearing. This Mus musculus (Mouse) protein is GRB2-related adapter protein.